We begin with the raw amino-acid sequence, 455 residues long: Probable hexose phosphate transport protein (455 aa).

Helical transmembrane passes span 34 to 54, 70 to 90, 113 to 133, 161 to 181, and 185 to 205; these read IFYS…SFTF, LGII…VSGV, IFFG…LNGW, VWST…GFII, and GWRG…LVLI. Residues 219–242 are disordered; the sequence is PIEKYKRDPHHAHHEGKSASEGTE. Helical transmembrane passes span 257-277, 302-322, 331-351, 363-383, 394-414, and 424-444; these read YVLT…IYIV, FCVS…GWLS, GPMN…MWFS, LLFV…LAAA, ASGF…YPLG, and GFFI…LPTW.

Belongs to the major facilitator superfamily. Organophosphate:Pi antiporter (OPA) (TC 2.A.1.4) family.

It localises to the cell membrane. Transport protein for sugar phosphate uptake. In Chlamydia pneumoniae (Chlamydophila pneumoniae), this protein is Probable hexose phosphate transport protein (uhpC).